The primary structure comprises 121 residues: MAEHNLLGKAGEDAAVDYLERHDYVIRHRNWRKGHFELDIVAAKNGELIIVEVKTRSDTDFALPQDAVTPQKIRRTVIAADTYIKLFQIDEPVRFDIITVIGKTGNFRIEHIKEAFYPPLF.

This sequence belongs to the UPF0102 family.

This Bacteroides fragilis (strain YCH46) protein is UPF0102 protein BF0706.